The primary structure comprises 372 residues: Tubby-like F-box protein 9 (372 aa).

Residues 1–51 (MALWRCSSSWLSSVSRSSGGVGGGESKVSPEIAPVSGGEGEGEEEEGEEER) form a disordered region. Residues 7–18 (SSSWLSSVSRSS) show a composition bias toward low complexity. Residues 40–49 (GEGEEEEGEE) are compositionally biased toward acidic residues. Residues 50-105 (ERWSRLLPELLTEIMRRVDAGAERWPPRRDVVACACVCRRWRDAAVSVVRPPLECG) enclose the F-box domain.

It belongs to the TUB family. In terms of tissue distribution, ubiquitous.

The polypeptide is Tubby-like F-box protein 9 (TULP9) (Oryza sativa subsp. japonica (Rice)).